Reading from the N-terminus, the 203-residue chain is Cardiotrophin-2 (203 aa).

The signal sequence occupies residues M1–A21. Residue N43 is glycosylated (N-linked (GlcNAc...) asparagine).

Belongs to the IL-6 superfamily.

The protein localises to the secreted. In terms of biological role, may have an important role in neuronal precursor development and maturation. The chain is Cardiotrophin-2 (CTF2) from Pan troglodytes (Chimpanzee).